The sequence spans 236 residues: Lipoarabinomannan carrier protein LprG (236 aa).

Residues 1–25 form the signal peptide; it reads MQTRPRFAVQSLFAILATAAALVAG. Cys-26 carries the N-palmitoyl cysteine lipid modification. Cys-26 carries S-diacylglycerol cysteine lipidation.

This sequence belongs to the LppX/LprAFG lipoprotein family. Interacts with itself, Ag85A (MSMEG_6398), LppI (MSMEG_3851) and LppK (MSMEG_3904) in vivo.

It localises to the cell inner membrane. The protein resides in the secreted. Its subcellular location is the cell wall. Helps membrane protein MSMEG_3069/MSMEI_2992 (P55) transport triacylglycerides (TAG) across the inner cell membrane into the periplasm and probably ultimately to the outer membrane. Binds TAG in its hydrophobic cavity and transfers it between lipid bilayers. TAG probably regulates lipid metabolism and growth regulation and plays a structural role in the outer membrane. Also binds mannosides, lipoarabinomannan and lipomannan and various glycolipids in the same cavity. Required for MSMEG_3069/MSMEI_2992 export activity. Export of ethidium bromide by MSMEG_3069/MSMEI_2992 can be complemented by the equivalent operon from M.tuberculosis (lprG-Rv1410c). Involved in mycolylation. The protein is Lipoarabinomannan carrier protein LprG of Mycolicibacterium smegmatis (strain ATCC 700084 / mc(2)155) (Mycobacterium smegmatis).